Here is a 380-residue protein sequence, read N- to C-terminus: Glucose-1-phosphate adenylyltransferase (380 aa).

Alpha-D-glucose 1-phosphate contacts are provided by residues Gly164, Glu179 to Lys180, and Ser190.

This sequence belongs to the bacterial/plant glucose-1-phosphate adenylyltransferase family. As to quaternary structure, homotetramer.

It catalyses the reaction alpha-D-glucose 1-phosphate + ATP + H(+) = ADP-alpha-D-glucose + diphosphate. Its pathway is glycan biosynthesis; glycogen biosynthesis. Involved in the biosynthesis of ADP-glucose, a building block required for the elongation reactions to produce glycogen. Catalyzes the reaction between ATP and alpha-D-glucose 1-phosphate (G1P) to produce pyrophosphate and ADP-Glc. This is Glucose-1-phosphate adenylyltransferase from Ligilactobacillus salivarius (strain UCC118) (Lactobacillus salivarius).